The primary structure comprises 236 residues: SERTA domain-containing protein 1 (236 aa).

The SERTA domain occupies 38 to 85 (PTVASSSLFDLSVVKLHHSLRQSEPDLRHLVLVVNTLRRIQASMEPAP). The tract at residues 190–211 (ASEGLKPGPENGPAKEEPPELD) is disordered.

In terms of assembly, interacts with the PHD-bromodomain of TIF1, TRIM28/TIF1B and p300/CBP. Interacts with E2F1 and TFDP1; modulates transactivation activity of TFDP1/E2F complexes. Also interacts with CDK4. In terms of processing, polyubiquitinated, which promotes proteasomal degradation. As to expression, detected at in testis, lung and, at lower levels, in muscle, liver, spleen, brain and heart.

Functionally, acts at E2F-responsive promoters as coregulator to integrate signals provided by PHD- and/or bromodomain-containing transcription factors. Stimulates E2F1/TFDP1 transcriptional activity. Renders the activity of cyclin D1/CDK4 resistant to the inhibitory effects of CDKN2A/p16INK4A. The chain is SERTA domain-containing protein 1 (Sertad1) from Mus musculus (Mouse).